Reading from the N-terminus, the 127-residue chain is UPF0166 protein PYRAB06660 (127 aa).

The protein belongs to the UPF0166 family.

The sequence is that of UPF0166 protein PYRAB06660 from Pyrococcus abyssi (strain GE5 / Orsay).